The chain runs to 89 residues: Small ribosomal subunit protein uS15 (89 aa).

It belongs to the universal ribosomal protein uS15 family. In terms of assembly, part of the 30S ribosomal subunit. Forms a bridge to the 50S subunit in the 70S ribosome, contacting the 23S rRNA.

One of the primary rRNA binding proteins, it binds directly to 16S rRNA where it helps nucleate assembly of the platform of the 30S subunit by binding and bridging several RNA helices of the 16S rRNA. Functionally, forms an intersubunit bridge (bridge B4) with the 23S rRNA of the 50S subunit in the ribosome. The protein is Small ribosomal subunit protein uS15 of Lactiplantibacillus plantarum (strain ATCC BAA-793 / NCIMB 8826 / WCFS1) (Lactobacillus plantarum).